We begin with the raw amino-acid sequence, 217 residues long: Ribosomal RNA small subunit methyltransferase G (217 aa).

Residues glycine 79, leucine 84, 130–131 (IE), and arginine 145 each bind S-adenosyl-L-methionine.

The protein belongs to the methyltransferase superfamily. RNA methyltransferase RsmG family.

The protein resides in the cytoplasm. It carries out the reaction guanosine(527) in 16S rRNA + S-adenosyl-L-methionine = N(7)-methylguanosine(527) in 16S rRNA + S-adenosyl-L-homocysteine. Functionally, specifically methylates the N7 position of guanine in position 527 of 16S rRNA. This chain is Ribosomal RNA small subunit methyltransferase G, found in Hahella chejuensis (strain KCTC 2396).